The chain runs to 147 residues: SsrA-binding protein (147 aa).

Belongs to the SmpB family.

Its subcellular location is the cytoplasm. Functionally, required for rescue of stalled ribosomes mediated by trans-translation. Binds to transfer-messenger RNA (tmRNA), required for stable association of tmRNA with ribosomes. tmRNA and SmpB together mimic tRNA shape, replacing the anticodon stem-loop with SmpB. tmRNA is encoded by the ssrA gene; the 2 termini fold to resemble tRNA(Ala) and it encodes a 'tag peptide', a short internal open reading frame. During trans-translation Ala-aminoacylated tmRNA acts like a tRNA, entering the A-site of stalled ribosomes, displacing the stalled mRNA. The ribosome then switches to translate the ORF on the tmRNA; the nascent peptide is terminated with the 'tag peptide' encoded by the tmRNA and targeted for degradation. The ribosome is freed to recommence translation, which seems to be the essential function of trans-translation. In Thermosipho melanesiensis (strain DSM 12029 / CIP 104789 / BI429), this protein is SsrA-binding protein.